The primary structure comprises 2293 residues: G-protein coupled receptor 179 (2293 aa).

Positions 1–27 (MGARAVVISSLAWGLLSCCFLCSGALG) are cleaved as a signal peptide. A cache-like region region spans residues 62–245 (FLYSGDVQRL…CHEGQLRPGW (184 aa)). A glycan (N-linked (GlcNAc...) asparagine) is linked at Asn75. A disulfide bridge connects residues Cys76 and Cys236. An N-linked (GlcNAc...) asparagine glycan is attached at Asn298. Transmembrane regions (helical) follow at residues 383–403 (AVLACQACCMLAVFLSMLVAY), 416–436 (IVLLETILFGSLLLYFPVFIL), 445–465 (CVALRWVRLLGFAVVYGTIIL), 494–514 (LGQLLLLVLGFLVVWTAGALE), 544–564 (YIMVVAEMLLLCWGSFLCYAT), 585–602 (LLLSTAFHTARFVLVPSL), and 608–628 (LLLFFLHTHSTVTATLALIFI). A disulfide bridge links Cys445 with Cys537. A glycan (N-linked (GlcNAc...) asparagine) is linked at Asn661. The tract at residues 733–812 (QHSRDSGSLG…GRESLADGPP (80 aa)) is disordered. Over residues 738–759 (SGSLGLGSLPGSSRRRLLSSSL) the composition is skewed to low complexity. A compositionally biased stretch (basic and acidic residues) spans 773–782 (STYDHHREHN). A glycan (N-linked (GlcNAc...) asparagine) is linked at Asn823. 11 disordered regions span residues 872-935 (EERK…HPPI), 1046-1235 (GTGE…NPAL), 1275-1294 (ERTEGGSLEKKPSRQVLSRS), 1326-1345 (EAVCPWESPDSGGLSPQLVH), 1388-1411 (GTSTQRVQELPEERQKSPKKATFW), 1479-1560 (ELAG…HGGS), 1578-1770 (ATLS…VCPW), 1792-1828 (TVGKGLEREPGCEPERQRRQNLEEAGLPFQEEGTSKG), 1844-1882 (WKPPAQVPKVSDLPLSTVGQGVEGQSLEASDRASEKGEL), 1924-2051 (SSSH…GSEK), and 2212-2293 (FLPE…WDCE). Polar residues predominate over residues 1080 to 1089 (LKTPLQQGSV). Composition is skewed to basic and acidic residues over residues 1105–1123 (TYKEKDGGEGTPETEKGKP), 1173–1186 (CQKEGSREQEDRNK), and 1275–1286 (ERTEGGSLEKKP). Composition is skewed to basic and acidic residues over residues 1546 to 1555 (ASSKAGEKLL) and 1597 to 1632 (RTSEHPSKGEVHKDEEKMPGRARIKAQEEAEGRIQK). The segment covering 1644-1663 (PGSTPQRDTEKAQASLQRQG) has biased composition (polar residues). Basic and acidic residues-rich tracts occupy residues 1682–1698 (GEERTIGAEASEARPND) and 1717–1728 (KKSERLGSEKEV). Residues 1737–1747 (PGDSSQQPDTP) are compositionally biased toward polar residues. Composition is skewed to basic and acidic residues over residues 1748 to 1761 (NTEKLKDELQEHGS), 1796 to 1813 (GLEREPGCEPERQRRQNL), and 1872 to 1882 (ASDRASEKGEL). The span at 1937 to 1948 (RVSSQPLVSTGD) shows a compositional bias: polar residues. Residues 1979 to 2007 (TETEMSRQDEKEKSQEEKERAPETRDHEG) show a composition bias toward basic and acidic residues. Over residues 2283-2293 (SPPPDYPWDCE) the composition is skewed to pro residues.

Belongs to the G-protein coupled receptor 3 family. In terms of assembly, homodimer. Associates with the R7 group RGS-GNB5 complexes, composed of an R7 group RGS subunit (RGS6, RGS7, RGS9 or RGS11) and GNB5, promoting their localization to the cell membrane and regulating the GTPase activator activity of R7 RGS proteins. Interacts with TRPM1. Interacts with GRM6. Interacts with EGFLAM; transsynaptic interaction is required for synaptic organization of photoreceptor cells.

It localises to the cell membrane. Its subcellular location is the postsynaptic cell membrane. The protein resides in the cell projection. It is found in the dendrite. In terms of biological role, orphan receptor involved in vision. Required for signal transduction through retinal depolarizing bipolar cells. Acts as an atypical G-protein coupled receptor that recruits and regulates the R7 group RGS-GNB5 complexes instead of activating G proteins: promotes the GTPase activator activity of R7 RGS proteins, increasing the GTPase activity of G protein alpha subunits, thereby driving them into their inactive GDP-bound form. Associates with components of metabotropic signaling cascade in retina ON-bipolar neurons, such as TRPM1 and GRM6: may control the ability of the GRM6 cascade to gate TRPM1. This Mus musculus (Mouse) protein is G-protein coupled receptor 179.